A 162-amino-acid polypeptide reads, in one-letter code: CD-NTase-associated protein 7 (162 aa).

The segment at 138-162 is disordered; sequence HSGLTQSGGREYSSNGYGMQRKDYN. The span at 139-154 shows a compositional bias: polar residues; it reads SGLTQSGGREYSSNGY.

Belongs to the HORMA family. HORMA1 subfamily. As to quaternary structure, forms complexes with CdnC with 1:1 and 2:2 stoichimetry, and a 1:1:6 CdnC:Cap7:Cap6 complex.

Functionally, sensor protein of a CBASS antivirus system. CBASS (cyclic oligonucleotide-based antiphage signaling system) provides immunity against bacteriophage. The CD-NTase protein synthesizes cyclic nucleotides in response to infection; these serve as specific second messenger signals. The signals activate a diverse range of effectors, leading to bacterial cell death and thus abortive phage infection. A type III CBASS system. Expression of this CBASS system (Cap18-Cap6-Cap7-CdnC-CapW-Cap17) in a susceptible E.coli (strain MG1655) confers resistance to bacteriophage P1. The sensor protein for this CBASS system. Binds to a closure peptide, which allows it to activate CdnC for second messenger synthesis. This is CD-NTase-associated protein 7 from Escherichia coli (strain KTE188).